Consider the following 862-residue polypeptide: Phosphofurin acidic cluster sorting protein 2 (862 aa).

3 disordered regions span residues 151-215, 263-436, and 658-713; these read HEDS…TTSM, LDVE…TRSQ, and SSAT…SQGV. A compositionally biased stretch (low complexity) spans 263 to 272; that stretch reads LDVENPSDSG. Residues 313 to 328 are compositionally biased toward basic and acidic residues; sequence SHREPPSPADVPEKTR. Polar residues predominate over residues 332 to 344; it reads GKQQLSDSVSDTV. A phosphoserine mark is found at Ser-361, Ser-387, Ser-424, Ser-662, and Ser-665. Composition is skewed to low complexity over residues 658–693 and 700–710; these read SSAT…KEAS and PSVSGGLSSPS.

The protein belongs to the PACS family. As to quaternary structure, interacts with BID and PKD2. Interacts with SIRT1. Interacts with HDAC1. Interacts with TRPV1. Interacts with WDR37.

The protein localises to the endoplasmic reticulum. It is found in the mitochondrion. In terms of biological role, multifunctional sorting protein that controls the endoplasmic reticulum (ER)-mitochondria communication, including the apposition of mitochondria with the ER and ER homeostasis. In addition, in response to apoptotic inducer, translocates BIB to mitochondria, which initiates a sequence of events including the formation of mitochondrial truncated BID, the release of cytochrome c, the activation of caspase-3 thereby causing cell death. May also involved in ion channel trafficking, directing acidic cluster-containing ion channels to distinct subcellular compartments. In Mus musculus (Mouse), this protein is Phosphofurin acidic cluster sorting protein 2 (Pacs2).